We begin with the raw amino-acid sequence, 83 residues long: Exodeoxyribonuclease 7 small subunit (83 aa).

It belongs to the XseB family. In terms of assembly, heterooligomer composed of large and small subunits.

It is found in the cytoplasm. It catalyses the reaction Exonucleolytic cleavage in either 5'- to 3'- or 3'- to 5'-direction to yield nucleoside 5'-phosphates.. Its function is as follows. Bidirectionally degrades single-stranded DNA into large acid-insoluble oligonucleotides, which are then degraded further into small acid-soluble oligonucleotides. The chain is Exodeoxyribonuclease 7 small subunit from Rhodopseudomonas palustris (strain BisB5).